A 594-amino-acid polypeptide reads, in one-letter code: Grainyhead-like protein 3 homolog (594 aa).

2 transcription activation regions span residues 25-75 (NDDE…RIIT) and 28-91 (EAWS…SCIE). One can recognise a Grh/CP2 DB domain in the interval 220–453 (ANRDFECTLE…DMETHPVLFI (234 aa)). The segment at 483-503 (SSQSFPESFEAPPSKQQTNED) is disordered.

It belongs to the grh/CP2 family. Grainyhead subfamily.

It is found in the nucleus. Functionally, transcription factor playing important roles in primary neurulation and in the differentiation of stratified epithelia of both ectodermal and endodermal origin. Binds directly to the consensus DNA sequence 5'-AACCGGTT-3' acting as an activator and repressor on distinct target genes. This Xenopus tropicalis (Western clawed frog) protein is Grainyhead-like protein 3 homolog (grhl3).